Here is a 187-residue protein sequence, read N- to C-terminus: Protein McbG (187 aa).

Belongs to the pentapeptide repeat protein family.

Together with proteins McbE and McbF this protein causes immunity to the peptide antibiotic microcin B17 (MccB17), which inhibits DNA replication in Enterobacteriaceae by induction of the SOS repair system. McbG alone can provide some protection. In Escherichia coli, this protein is Protein McbG (mcbG).